Here is a 142-residue protein sequence, read N- to C-terminus: Galectin-16 (142 aa).

The Galectin domain maps to 6-138 (VPYKLPVSLS…DVSLDSVLVN (133 aa)).

Predominantly and highly expressed in the placenta where it is localized mainly in the syncytiotrophoblast and in the endothelia of fetal vessels. Also detected in the amnion and chorionic trophoblasts in fetal membranes.

Its function is as follows. Binds lactose with high affinity. Strong inducer of T-cell apoptosis. The sequence is that of Galectin-16 from Homo sapiens (Human).